The primary structure comprises 535 residues: Nuclear/nucleolar GTPase 2 (535 aa).

The segment at 1 to 42 is disordered; the sequence is MAKKKERAVNVSGKPRHSLDVNRANDKKGAGGGAGGGGGGRS. Residues 17-29 show a composition bias toward basic and acidic residues; that stretch reads HSLDVNRANDKKG. Residues 30 to 41 are compositionally biased toward gly residues; it reads AGGGAGGGGGGR. Residues 213-374 enclose the CP-type G domain; the sequence is WGELYKVIDS…LIDCPGVVYQ (162 aa). Residues 261–264 are G4; that stretch reads NKCD. The tract at residues 290-292 is G5; that stretch reads SIN. The segment at 323-330 is G1; sequence GYPNVGKS. The segment at 349–353 is G2; the sequence is GETKV. The G3 stretch occupies residues 367-370; the sequence is DCPG. Residues 464–494 are disordered; sequence FFVPPPQQGEDSPSETAEPVEKSDEEGVSSD.

Belongs to the TRAFAC class YlqF/YawG GTPase family. RsgA subfamily. As to quaternary structure, interacts (via N-terminus) with the 60S ribosomal proteins RPL10A. This interaction is enhanced by the addition of GTP. In terms of tissue distribution, expressed in roots, shoot apical meristem, leaves, leaf sheaths and flowers.

It localises to the nucleus. The protein localises to the nucleolus. The GTPase activity is stimulated in the presence of ribosomes, particularly of the 60S subunit. Its function is as follows. GTPase involved in pre-60S ribosomal subunit maturation. In Oryza sativa subsp. japonica (Rice), this protein is Nuclear/nucleolar GTPase 2.